The primary structure comprises 181 residues: Adenine phosphoribosyltransferase (181 aa).

Belongs to the purine/pyrimidine phosphoribosyltransferase family. Homodimer.

It is found in the cytoplasm. It catalyses the reaction AMP + diphosphate = 5-phospho-alpha-D-ribose 1-diphosphate + adenine. It functions in the pathway purine metabolism; AMP biosynthesis via salvage pathway; AMP from adenine: step 1/1. Functionally, catalyzes a salvage reaction resulting in the formation of AMP, that is energically less costly than de novo synthesis. The chain is Adenine phosphoribosyltransferase from Aliivibrio fischeri (strain ATCC 700601 / ES114) (Vibrio fischeri).